A 105-amino-acid chain; its full sequence is Small cysteine and glycine repeat-containing protein 4 (105 aa).

The 14 X 2 AA repeats of CG stretch occupies residues Cys-4–Gly-87.

Belongs to the KRTAP type 28 family.

In the hair cortex, hair keratin intermediate filaments are embedded in an interfilamentous matrix, consisting of hair keratin-associated proteins (KRTAP), which are essential for the formation of a rigid and resistant hair shaft through their extensive disulfide bond cross-linking with abundant cysteine residues of hair keratins. The matrix proteins include the high-sulfur and high-glycine-tyrosine keratins. The sequence is that of Small cysteine and glycine repeat-containing protein 4 from Homo sapiens (Human).